A 282-amino-acid polypeptide reads, in one-letter code: Bifunctional protein FolD (282 aa).

Residues Asn-163 to Ser-165, Thr-188, and Ile-229 contribute to the NADP(+) site.

This sequence belongs to the tetrahydrofolate dehydrogenase/cyclohydrolase family. As to quaternary structure, homodimer.

The enzyme catalyses (6R)-5,10-methylene-5,6,7,8-tetrahydrofolate + NADP(+) = (6R)-5,10-methenyltetrahydrofolate + NADPH. It catalyses the reaction (6R)-5,10-methenyltetrahydrofolate + H2O = (6R)-10-formyltetrahydrofolate + H(+). It functions in the pathway one-carbon metabolism; tetrahydrofolate interconversion. Its function is as follows. Catalyzes the oxidation of 5,10-methylenetetrahydrofolate to 5,10-methenyltetrahydrofolate and then the hydrolysis of 5,10-methenyltetrahydrofolate to 10-formyltetrahydrofolate. In Malacoplasma penetrans (strain HF-2) (Mycoplasma penetrans), this protein is Bifunctional protein FolD.